The sequence spans 259 residues: Bisphosphoglycerate mutase (259 aa).

The residue at position 2 (serine 2) is an N-acetylserine. Lysine 3 and lysine 5 each carry an N-linked (Glc) (glycation) lysine; in vitro glycan. Arginine 10–asparagine 17 lines the substrate pocket. The active-site Tele-phosphohistidine intermediate is histidine 11. N-linked (Glc) (glycation) lysine; in vitro glycosylation occurs at lysine 18. Cysteine 23–serine 24 provides a ligand contact to substrate. N-linked (Glc) (glycation) lysine; in vitro glycosylation is present at lysine 43. Substrate contacts are provided by residues arginine 62, glutamate 89–tyrosine 92, arginine 100, and arginine 116–arginine 117. The Proton donor/acceptor role is filled by glutamate 89. The residue at position 122 (threonine 122) is a Phosphothreonine. N-linked (Glc) (glycation) lysine glycosylation occurs at lysine 159. Glycine 189–asparagine 190 is a binding site for substrate. The N-linked (Glc) (glycation) lysine; in vitro glycan is linked to lysine 197.

This sequence belongs to the phosphoglycerate mutase family. BPG-dependent PGAM subfamily. As to quaternary structure, homodimer. Glycation of Lys-159 in diabetic patients inactivates the enzyme. In terms of tissue distribution, expressed in red blood cells. Expressed in non-erythroid cells of the placenta; present in the syncytiotrophoblast layer of the placental villi at the feto-maternal interface (at protein level).

It catalyses the reaction (2R)-3-phospho-glyceroyl phosphate = (2R)-2,3-bisphosphoglycerate + H(+). The catalysed reaction is (2R)-2-phosphoglycerate = (2R)-3-phosphoglycerate. At alkaline pH BPGM favors the synthase reaction; however, at lower pH the phosphatase reaction is dominant. Inhibited by citrate. Functionally, plays a major role in regulating hemoglobin oxygen affinity by controlling the levels of its allosteric effector 2,3-bisphosphoglycerate (2,3-BPG). Also exhibits mutase (EC 5.4.2.11) activity. The protein is Bisphosphoglycerate mutase (BPGM) of Homo sapiens (Human).